The primary structure comprises 666 residues: Endogenous retrovirus group K member 19 Gag polyprotein (666 aa).

G2 carries N-myristoyl glycine lipidation. 2 disordered regions span residues 170 to 189 (LVGPSESKPRGTSRLPAGQV) and 223 to 264 (PLES…GSEL). Positions 232-247 (GMPPAPQGRAPYPQPP) are enriched in pro residues. CCHC-type zinc fingers lie at residues 544–561 (GKCYNCGQIGHLKKNCPV) and 580–597 (DLCPRCKKGKHWASQCRS). The disordered stretch occupies residues 598–640 (KFDKNGQPLSGNEQRGQPQAPQQTGAFPIQPFVPHGFQGQQPP). Positions 604–622 (QPLSGNEQRGQPQAPQQTG) are enriched in polar residues.

It belongs to the beta type-B retroviral Gag protein family. HERV class-II K(HML-2) gag subfamily. In terms of processing, myristoylation is essential for retroviral assembly. Alteration of the glycine residue leads to a block in the budding of particles and an accumulation of Gag inside the cell. Specific enzymatic cleavages may yield mature proteins.

It is found in the cell membrane. The products of the Gag polyproteins of infectious retroviruses perform highly complex orchestrated tasks during the assembly, budding, maturation, and infection stages of the viral replication cycle. During viral assembly, the proteins form membrane associations and self-associations that ultimately result in budding of an immature virion from the infected cell. Gag precursors also function during viral assembly to selectively bind and package two plus strands of genomic RNA. Endogenous Gag proteins may have kept, lost or modified their original function during evolution. This is Endogenous retrovirus group K member 19 Gag polyprotein (ERVK-19) from Homo sapiens (Human).